A 376-amino-acid polypeptide reads, in one-letter code: Serpin B9 (376 aa).

Met-1 carries the post-translational modification N-acetylmethionine.

This sequence belongs to the serpin family. Ov-serpin subfamily.

The protein localises to the cytoplasm. Granzyme B inhibitor. The protein is Serpin B9 (SERPINB9) of Homo sapiens (Human).